Here is a 281-residue protein sequence, read N- to C-terminus: Splicing regulator RBM11 (281 aa).

The 78-residue stretch at 10-87 (RTVFVGNLEA…RPINVQYRFG (78 aa)) folds into the RRM domain. The disordered stretch occupies residues 184 to 281 (PSSYKWTHQQ…FRKSKKKKRY (98 aa)). 2 stretches are compositionally biased toward polar residues: residues 187 to 217 (YKWT…SSLN) and 229 to 242 (YKWT…SDLY). Positions 245 to 280 (NKRKRQKQTSDSDSSTDNNRGNECSQKFRKSKKKKR) match the Bipartite nuclear localization signal motif. A compositionally biased stretch (basic residues) spans 271–281 (KFRKSKKKKRY).

As to quaternary structure, homodimer. Expressed in brain, hippocampus, prefrontal cortex, cerebellum, spinal cord, testis, mammary gland, spleen and kidney. Also expressed in fetal brain.

Its subcellular location is the nucleus. The protein localises to the nucleoplasm. It is found in the nucleus speckle. Its function is as follows. Tissue-specific splicing factor with potential implication in the regulation of alternative splicing during neuron and germ cell differentiation. Antagonizes SRSF1-mediated BCL-X splicing. May affect the choice of alternative 5' splice sites by binding to specific sequences in exons and antagonizing the SR protein SRSF1. The chain is Splicing regulator RBM11 from Homo sapiens (Human).